The chain runs to 136 residues: Large ribosomal subunit protein uL16c (136 aa).

Belongs to the universal ribosomal protein uL16 family. In terms of assembly, part of the 50S ribosomal subunit.

It is found in the plastid. The protein localises to the chloroplast. In Phaseolus angularis (Azuki bean), this protein is Large ribosomal subunit protein uL16c.